Consider the following 389-residue polypeptide: Acetoin utilization protein AcuC (389 aa).

The protein belongs to the histone deacetylase family.

It functions in the pathway ketone degradation; acetoin degradation. In terms of biological role, role in growth on acetoin or butanediol. Involved in the breakdown of these compounds used as a carbon source. This Staphylococcus aureus (strain MSSA476) protein is Acetoin utilization protein AcuC (acuC).